A 418-amino-acid polypeptide reads, in one-letter code: Metacaspase-4 (418 aa).

Residues His86 and Cys139 contribute to the active site. Cys139 is modified (S-nitrosocysteine). The tract at residues 153 to 172 is disordered; it reads GESTKKEAEDEDESEESSSR.

Belongs to the peptidase C14B family. The two subunits are derived from the precursor sequence by an autocatalytic mechanism. As to expression, expressed in roots, cotyledons, leaves, cauline leaves, pollen and embryos.

The protein localises to the cytoplasm. It is found in the cytosol. Activated by Ca(2+) which induces self-processing and accelerates the rate of the enzyme activity, but has no effect on Km. Its function is as follows. Cysteine protease that cleaves specifically after arginine or lysine residues. Does not cleave caspase-specific substrates. Plays a positive regulatory role in biotic and abiotic stress-induced programmed cell death. This Arabidopsis thaliana (Mouse-ear cress) protein is Metacaspase-4 (AMC4).